A 1390-amino-acid chain; its full sequence is DNA-directed RNA polymerase subunit beta'' (1390 aa).

The Zn(2+) site is built by C220, C291, C298, and C301.

Belongs to the RNA polymerase beta' chain family. RpoC2 subfamily. In plastids the minimal PEP RNA polymerase catalytic core is composed of four subunits: alpha, beta, beta', and beta''. When a (nuclear-encoded) sigma factor is associated with the core the holoenzyme is formed, which can initiate transcription. It depends on Zn(2+) as a cofactor.

The protein localises to the plastid. It is found in the chloroplast. The enzyme catalyses RNA(n) + a ribonucleoside 5'-triphosphate = RNA(n+1) + diphosphate. In terms of biological role, DNA-dependent RNA polymerase catalyzes the transcription of DNA into RNA using the four ribonucleoside triphosphates as substrates. In Populus alba (White poplar), this protein is DNA-directed RNA polymerase subunit beta''.